Reading from the N-terminus, the 1039-residue chain is Antigenic heat-stable 120 kDa protein (1039 aa).

Disordered regions lie at residues 1–115 (MSKD…TSDP), 408–438 (SSIE…MPQP), and 1020–1039 (QSEN…FPPR). Residues 31–44 (PISSTANKDGNPDT) show a composition bias toward polar residues. Positions 54–69 (EYTEEQKQKLEQEQKE) are enriched in basic and acidic residues. Residues 85 to 114 (FSFTPASSTQSTPSISSLSGGISSDSQTSD) show a composition bias toward low complexity. Residues 424–438 (ANQPLQPETSQMPQP) show a composition bias toward polar residues. The segment covering 1030-1039 (IKRESSFPPR) has biased composition (basic and acidic residues).

It is found in the cytoplasm. The protein is Antigenic heat-stable 120 kDa protein (sca4) of Rickettsia felis (strain ATCC VR-1525 / URRWXCal2) (Rickettsia azadi).